A 692-amino-acid chain; its full sequence is Methionine--tRNA ligase (692 aa).

Residues 12–22 carry the 'HIGH' region motif; it reads PYANGPLHLGH. Residues Cys-143, Cys-146, Cys-156, and Cys-159 each coordinate Zn(2+). The 'KMSKS' region motif lies at 330-334; that stretch reads KMSKS. Lys-333 is a binding site for ATP. Residues 554-563 are compositionally biased toward low complexity; sequence AAAAPAAKPA. The interval 554 to 575 is disordered; sequence AAAAPAAKPAAPAPAPAPAKDE. In terms of domain architecture, tRNA-binding spans 589-692; that stretch reads DFAKLDLRIG…SGAQPGMPVR (104 aa).

It belongs to the class-I aminoacyl-tRNA synthetase family. MetG type 1 subfamily. In terms of assembly, homodimer. Zn(2+) serves as cofactor.

The protein resides in the cytoplasm. The catalysed reaction is tRNA(Met) + L-methionine + ATP = L-methionyl-tRNA(Met) + AMP + diphosphate. Is required not only for elongation of protein synthesis but also for the initiation of all mRNA translation through initiator tRNA(fMet) aminoacylation. The sequence is that of Methionine--tRNA ligase from Stenotrophomonas maltophilia (strain K279a).